We begin with the raw amino-acid sequence, 494 residues long: Glutamyl-tRNA(Gln) amidotransferase subunit A (494 aa).

Active-site charge relay system residues include K72 and S147. The active-site Acyl-ester intermediate is S171.

This sequence belongs to the amidase family. GatA subfamily. Heterotrimer of A, B and C subunits.

It catalyses the reaction L-glutamyl-tRNA(Gln) + L-glutamine + ATP + H2O = L-glutaminyl-tRNA(Gln) + L-glutamate + ADP + phosphate + H(+). Its function is as follows. Allows the formation of correctly charged Gln-tRNA(Gln) through the transamidation of misacylated Glu-tRNA(Gln) in organisms which lack glutaminyl-tRNA synthetase. The reaction takes place in the presence of glutamine and ATP through an activated gamma-phospho-Glu-tRNA(Gln). In Methylacidiphilum infernorum (isolate V4) (Methylokorus infernorum (strain V4)), this protein is Glutamyl-tRNA(Gln) amidotransferase subunit A.